Reading from the N-terminus, the 550-residue chain is Arginine--tRNA ligase (550 aa).

The 'HIGH' region signature appears at 130 to 140 (ANPTGPIHIGG).

The protein belongs to the class-I aminoacyl-tRNA synthetase family. Monomer.

It is found in the cytoplasm. It carries out the reaction tRNA(Arg) + L-arginine + ATP = L-arginyl-tRNA(Arg) + AMP + diphosphate. This chain is Arginine--tRNA ligase, found in Mycolicibacterium paratuberculosis (strain ATCC BAA-968 / K-10) (Mycobacterium paratuberculosis).